The chain runs to 136 residues: Small ribosomal subunit protein uS8c (136 aa).

It belongs to the universal ribosomal protein uS8 family. Part of the 30S ribosomal subunit.

It is found in the plastid. It localises to the chloroplast. One of the primary rRNA binding proteins, it binds directly to 16S rRNA central domain where it helps coordinate assembly of the platform of the 30S subunit. In Saccharum hybrid (Sugarcane), this protein is Small ribosomal subunit protein uS8c (rps8).